We begin with the raw amino-acid sequence, 326 residues long: Guanine nucleotide-binding protein subunit beta-like protein 1 (326 aa).

WD repeat units lie at residues 17–61 (GTQS…IVTT), 64–104 (GHGG…NTIM), 159–202 (ARPG…VCSQ), 205–244 (CHEE…SLQV), 250–291 (LTNP…AVLA), and 292–325 (FHSA…LYPC).

Expressed at low levels in most tissues and highly expressed in adult testis. Widely expressed in adult brain with striking regional distribution in forebrain, midbrain, and hindbrain structures, including the thalamus, hypothalamus, amygdala, hippocampus, pons.

Its subcellular location is the cytoplasm. The protein resides in the nucleus. Functionally, acts as a critical regulator of DNA damage response (DDR) signaling via specifically regulating phosphatidylinositol 3-kinase-related protein kinase (PIKK) family proteins. This is Guanine nucleotide-binding protein subunit beta-like protein 1 (Gnb1l) from Mus musculus (Mouse).